The sequence spans 530 residues: T-complex protein 1 subunit delta (530 aa).

A compositionally biased stretch (polar residues) spans 1 to 13 (MVSQAKQPSNATF). A disordered region spans residues 1 to 20 (MVSQAKQPSNATFKNREKPQ).

Belongs to the TCP-1 chaperonin family. As to quaternary structure, heterooligomeric complex of about 850 to 900 kDa that forms two stacked rings, 12 to 16 nm in diameter.

It localises to the cytoplasm. Functionally, molecular chaperone; assists the folding of proteins upon ATP hydrolysis. Known to play a role, in vitro, in the folding of actin and tubulin. This is T-complex protein 1 subunit delta (CCT4) from Kluyveromyces lactis (strain ATCC 8585 / CBS 2359 / DSM 70799 / NBRC 1267 / NRRL Y-1140 / WM37) (Yeast).